Consider the following 127-residue polypeptide: SH2 domain-containing protein 1A (127 aa).

The 97-residue stretch at valine 6–valine 102 folds into the SH2 domain. Positions glutamate 67–glutamine 92 are interaction with FYN SH3 domain. Lysine 89 is subject to N6-acetyllysine. The segment at lysine 104–proline 127 is disordered. Basic and acidic residues predominate over residues isoleucine 116 to proline 127.

Interacts with CD84, CD244, LY9, SLAMF1 and FYN. Interacts with NTRK1, NTRK2 and NTRK3.

The protein resides in the cytoplasm. Its function is as follows. Cytoplasmic adapter regulating receptors of the signaling lymphocytic activation molecule (SLAM) family such as SLAMF1, CD244, LY9, CD84, SLAMF6 and SLAMF7. In SLAM signaling seems to cooperate with SH2D1B/EAT-2. Initially it has been proposed that association with SLAMF1 prevents SLAMF1 binding to inhibitory effectors including INPP5D/SHIP1 and PTPN11/SHP-2. However, by simultaneous interactions, recruits FYN which subsequently phosphorylates and activates SLAMF1. Positively regulates CD244/2B4- and CD84-mediated natural killer (NK) cell functions. Can also promote CD48-, SLAMF6 -, LY9-, and SLAMF7-mediated NK cell activation. In the context of NK cell-mediated cytotoxicity enhances conjugate formation with target cells. May also regulate the activity of the neurotrophin receptors NTRK1, NTRK2 and NTRK3. This Saguinus oedipus (Cotton-top tamarin) protein is SH2 domain-containing protein 1A (SH2D1A).